A 271-amino-acid polypeptide reads, in one-letter code: NH(3)-dependent NAD(+) synthetase (271 aa).

Residue 43–50 (GISGGQDS) coordinates ATP. Residue aspartate 49 participates in Mg(2+) binding. Deamido-NAD(+) is bound at residue arginine 137. Threonine 157 is an ATP binding site. Residue glutamate 162 participates in Mg(2+) binding. Deamido-NAD(+)-binding residues include lysine 170 and aspartate 177. Residues lysine 186 and threonine 208 each contribute to the ATP site. 257-258 (HK) is a binding site for deamido-NAD(+).

Belongs to the NAD synthetase family. As to quaternary structure, homodimer.

The catalysed reaction is deamido-NAD(+) + NH4(+) + ATP = AMP + diphosphate + NAD(+) + H(+). The protein operates within cofactor biosynthesis; NAD(+) biosynthesis; NAD(+) from deamido-NAD(+) (ammonia route): step 1/1. In terms of biological role, catalyzes the ATP-dependent amidation of deamido-NAD to form NAD. Uses ammonia as a nitrogen source. This chain is NH(3)-dependent NAD(+) synthetase, found in Exiguobacterium sibiricum (strain DSM 17290 / CCUG 55495 / CIP 109462 / JCM 13490 / 255-15).